A 327-amino-acid chain; its full sequence is Porphobilinogen deaminase (327 aa).

The residue at position 250 (cysteine 250) is an S-(dipyrrolylmethanemethyl)cysteine.

This sequence belongs to the HMBS family. Monomer. The cofactor is dipyrromethane.

The enzyme catalyses 4 porphobilinogen + H2O = hydroxymethylbilane + 4 NH4(+). Its pathway is porphyrin-containing compound metabolism; protoporphyrin-IX biosynthesis; coproporphyrinogen-III from 5-aminolevulinate: step 2/4. In terms of biological role, tetrapolymerization of the monopyrrole PBG into the hydroxymethylbilane pre-uroporphyrinogen in several discrete steps. This chain is Porphobilinogen deaminase, found in Paraburkholderia phymatum (strain DSM 17167 / CIP 108236 / LMG 21445 / STM815) (Burkholderia phymatum).